The sequence spans 236 residues: (5-formylfuran-3-yl)methyl phosphate synthase (236 aa).

Residue Lys27 is the Schiff-base intermediate with substrate of the active site. Residue Lys85 is the Proton acceptor of the active site.

This sequence belongs to the MfnB family.

The catalysed reaction is 2 D-glyceraldehyde 3-phosphate = 4-(hydroxymethyl)-2-furancarboxaldehyde phosphate + phosphate + 2 H2O. It functions in the pathway cofactor biosynthesis; methanofuran biosynthesis. Its function is as follows. Catalyzes the formation of 4-(hydroxymethyl)-2-furancarboxaldehyde phosphate (4-HFC-P) from two molecules of glyceraldehyde-3-P (GA-3-P). In Methanococcus maripaludis (strain DSM 14266 / JCM 13030 / NBRC 101832 / S2 / LL), this protein is (5-formylfuran-3-yl)methyl phosphate synthase.